A 436-amino-acid polypeptide reads, in one-letter code: MKASGSLDSWREYFRRRGDSDIFGIIDHAIMVAATDCPNKFKSRRDKIAELLFSCRVNRCVGCDHLELSVPGDDEANRGTTGNGGGGTAVDEDYEVAGGSKESKANSSRGDNNQIVSNYTFDEAEALSDEIEEFSVVSKEVARIKEILLNKEDEPNSVLLDSLRHLKLMSLNVDILKSTEIGKAVNGLRKHSSDKIRQLAKTLIAEWKELVDQWVNTTKEITGAEGTPESANPSVLDEEEAFPSLPYDVDIFTPEPNGFEISHFFDSLDFDGNPRNSEEHNTSREHERRPQNIAKRKPEGTQMRIQDAPFRSIKPSSATDFDGTRRPVKQSTEQRMKNETVSVHKSEKPMIQRKPVVTEQKRKAPGPQQEKLKGLDADAKFEFAKRKLQESYQHHENAKKQRTIQVLEMIPKQGSAQKPQLKRPGMSNRNWANGRK.

The segment at 71–111 (PGDDEANRGTTGNGGGGTAVDEDYEVAGGSKESKANSSRGD) is disordered. A TFIIS N-terminal domain is found at 139-214 (KEVARIKEIL…AEWKELVDQW (76 aa)). The interval 263–376 (HFFDSLDFDG…PQQEKLKGLD (114 aa)) is disordered. Basic and acidic residues-rich tracts occupy residues 276–290 (NSEE…ERRP) and 332–350 (TEQR…EKPM). Positions 382-402 (EFAKRKLQESYQHHENAKKQR) form a coiled coil. Residues 408 to 436 (EMIPKQGSAQKPQLKRPGMSNRNWANGRK) form a disordered region. Over residues 427 to 436 (SNRNWANGRK) the composition is skewed to polar residues.

It belongs to the Mediator complex subunit 26 family. Component of the Mediator complex.

The protein resides in the nucleus. Its function is as follows. Component of the Mediator complex, a coactivator involved in the regulated transcription of nearly all RNA polymerase II-dependent genes. Mediator functions as a bridge to convey information from gene-specific regulatory proteins to the basal RNA polymerase II transcription machinery. The Mediator complex, having a compact conformation in its free form, is recruited to promoters by direct interactions with regulatory proteins and serves for the assembly of a functional preinitiation complex with RNA polymerase II and the general transcription factors. May play a role in transcription elongation. The protein is Probable mediator of RNA polymerase II transcription subunit 26b (MED26B) of Arabidopsis thaliana (Mouse-ear cress).